Here is a 330-residue protein sequence, read N- to C-terminus: GTP 3',8-cyclase (330 aa).

The Radical SAM core domain occupies 14-225; it reads RFGRTVDYVR…RERLADAYPE (212 aa). Arg23 serves as a coordination point for GTP. Cys30 and Cys34 together coordinate [4Fe-4S] cluster. Tyr36 contacts S-adenosyl-L-methionine. Cys37 is a [4Fe-4S] cluster binding site. Arg70 is a GTP binding site. Gly74 contacts S-adenosyl-L-methionine. Thr101 serves as a coordination point for GTP. Position 125 (Ser125) interacts with S-adenosyl-L-methionine. Lys162 contributes to the GTP binding site. [4Fe-4S] cluster is bound by residues Cys259 and Cys262. GTP is bound at residue 264-266; that stretch reads KLR. A [4Fe-4S] cluster-binding site is contributed by Cys276. The span at 309 to 318 shows a compositional bias: basic and acidic residues; the sequence is KPKDGLKSSH. A disordered region spans residues 309–330; that stretch reads KPKDGLKSSHDTAASSMSQIGG. Over residues 319–330 the composition is skewed to polar residues; that stretch reads DTAASSMSQIGG.

This sequence belongs to the radical SAM superfamily. MoaA family. Monomer and homodimer. The cofactor is [4Fe-4S] cluster.

The catalysed reaction is GTP + AH2 + S-adenosyl-L-methionine = (8S)-3',8-cyclo-7,8-dihydroguanosine 5'-triphosphate + 5'-deoxyadenosine + L-methionine + A + H(+). The protein operates within cofactor biosynthesis; molybdopterin biosynthesis. Functionally, catalyzes the cyclization of GTP to (8S)-3',8-cyclo-7,8-dihydroguanosine 5'-triphosphate. The chain is GTP 3',8-cyclase from Chlorobaculum tepidum (strain ATCC 49652 / DSM 12025 / NBRC 103806 / TLS) (Chlorobium tepidum).